We begin with the raw amino-acid sequence, 147 residues long: 3-dehydroquinate dehydratase (147 aa).

The Proton acceptor role is filled by Tyr-24. Asn-73, His-79, and Asp-86 together coordinate substrate. Residue His-99 is the Proton donor of the active site. Substrate-binding positions include 100 to 101 (LS) and Arg-110.

The protein belongs to the type-II 3-dehydroquinase family. Homododecamer.

It carries out the reaction 3-dehydroquinate = 3-dehydroshikimate + H2O. Its pathway is metabolic intermediate biosynthesis; chorismate biosynthesis; chorismate from D-erythrose 4-phosphate and phosphoenolpyruvate: step 3/7. In terms of biological role, catalyzes a trans-dehydration via an enolate intermediate. The polypeptide is 3-dehydroquinate dehydratase (Hyphomonas neptunium (strain ATCC 15444)).